The chain runs to 450 residues: MERTTIMTLDFSKPGEAGYQSGFANEFATEALPGALPHARNSPQRAPYGLYAEQLSGTAFTAPRGHNRRSWLYRIRPAAVHRPFELVSGERRIVADFGDSGDVPPTPPNQLRWDPLPMPAQPTDFVDGWVTMAGNGSAAAMSGCAIHLYAANRSMRERFFYSADGELLIVPQEGRLFIMTELGRLDVEPFEIAVIPRGVRFAVALPDGRARGYVCENFGALLRLPDLGPIGSNGLANPRDFLTPNASYEDREGAFELVAKLNGRLWRADIDHSPFDVVAWHGNYAPYKYDLRHFNTIGSISYDHPDPSIFLVLQSQSDTPGVDAIDFVIFPPRWLAAEDTFRPPWFHRNVASEFMGLVHGVYDAKAEGFVPGGASLHNCMSGHGPDADTFEKASAIDTSRPNKVGDTMAFMFETRTLIRPTRFALDTAQLQANYFECWQGLKKHFNPEQR.

The active-site Proton acceptor is the H304. Fe cation is bound by residues H347 and E353. Homogentisate-binding residues include Y362 and H383. A Fe cation-binding site is contributed by H383.

It belongs to the homogentisate dioxygenase family. Hexamer; dimer of trimers. Fe cation is required as a cofactor.

It catalyses the reaction homogentisate + O2 = 4-maleylacetoacetate + H(+). It functions in the pathway amino-acid degradation; L-phenylalanine degradation; acetoacetate and fumarate from L-phenylalanine: step 4/6. Functionally, involved in the catabolism of homogentisate (2,5-dihydroxyphenylacetate or 2,5-OH-PhAc), a central intermediate in the degradation of phenylalanine and tyrosine. Catalyzes the oxidative ring cleavage of the aromatic ring of homogentisate to yield maleylacetoacetate. This Burkholderia thailandensis (strain ATCC 700388 / DSM 13276 / CCUG 48851 / CIP 106301 / E264) protein is Homogentisate 1,2-dioxygenase.